A 189-amino-acid chain; its full sequence is Peptidyl-tRNA hydrolase (189 aa).

Tyrosine 15 provides a ligand contact to tRNA. Histidine 20 functions as the Proton acceptor in the catalytic mechanism. Residues phenylalanine 66, asparagine 68, and asparagine 114 each coordinate tRNA.

Belongs to the PTH family. As to quaternary structure, monomer.

The protein resides in the cytoplasm. It catalyses the reaction an N-acyl-L-alpha-aminoacyl-tRNA + H2O = an N-acyl-L-amino acid + a tRNA + H(+). Its function is as follows. Hydrolyzes ribosome-free peptidyl-tRNAs (with 1 or more amino acids incorporated), which drop off the ribosome during protein synthesis, or as a result of ribosome stalling. In terms of biological role, catalyzes the release of premature peptidyl moieties from peptidyl-tRNA molecules trapped in stalled 50S ribosomal subunits, and thus maintains levels of free tRNAs and 50S ribosomes. This is Peptidyl-tRNA hydrolase from Streptococcus suis (strain 98HAH33).